We begin with the raw amino-acid sequence, 33 residues long: Neutrophil defensin 1 (33 aa).

3 disulfides stabilise this stretch: Cys-3–Cys-31, Cys-5–Cys-20, and Cys-10–Cys-30.

This sequence belongs to the alpha-defensin family.

It is found in the secreted. Anti-fungal and bactericidal activity, greater against Gram-positive bacteria. This chain is Neutrophil defensin 1, found in Mesocricetus auratus (Golden hamster).